The primary structure comprises 1447 residues: Calcium-dependent secretion activator (1447 aa).

The segment covering 1–15 (MIDPSSSEEEGEDDA) has biased composition (acidic residues). Disordered regions lie at residues 1-35 (MIDPSSSEEEGEDDAVPNVSSKGRLTNTTKGTSAV) and 101-163 (DTGN…EEEE). Polar residues-rich tracts occupy residues 18 to 32 (NVSSKGRLTNTTKGT) and 111 to 126 (GIPSGISQETLNQSVG). Low complexity predominate over residues 127–144 (SSRANSLPRPLSPSPSLT). Residues 145 to 163 (SEKHETAEPHGKHEREEEE) show a composition bias toward basic and acidic residues. The C2 domain maps to 417–547 (SKYGLQKLKR…PLSSKSPEWH (131 aa)). In terms of domain architecture, PH spans 573 to 683 (NMKHCGYLYA…WVMAMYRATG (111 aa)). Residues 970 to 1157 (VDMDRVLSEQ…DMIEQCIQRT (188 aa)) form the MHD1 domain. Acidic residues predominate over residues 1386–1395 (REGEEEDNGD). Residues 1386–1406 (REGEEEDNGDESTSNIPRGLP) are disordered.

Restricted to the nervous system at all stages of development and highly localized at synapses (at protein level).

It localises to the cytoplasmic vesicle membrane. It is found in the synapse. In terms of biological role, calcium-binding protein involved in exocytosis of vesicles filled with neurotransmitters and neuropeptides. May specifically mediate the Ca(2+)-dependent exocytosis of large dense-core vesicles (DCVs) and other dense-core vesicles. However, it probably also participates in small clear synaptic vesicles (SVs) exocytosis and it is unclear whether its function is related to Ca(2+) triggering. The protein is Calcium-dependent secretion activator of Drosophila melanogaster (Fruit fly).